We begin with the raw amino-acid sequence, 192 residues long: Fe/S biogenesis protein NfuA (192 aa).

Cys-149 and Cys-152 together coordinate [4Fe-4S] cluster.

This sequence belongs to the NfuA family. As to quaternary structure, homodimer. It depends on [4Fe-4S] cluster as a cofactor.

Involved in iron-sulfur cluster biogenesis. Binds a 4Fe-4S cluster, can transfer this cluster to apoproteins, and thereby intervenes in the maturation of Fe/S proteins. Could also act as a scaffold/chaperone for damaged Fe/S proteins. The polypeptide is Fe/S biogenesis protein NfuA (Shewanella sp. (strain MR-7)).